We begin with the raw amino-acid sequence, 273 residues long: Protein FAM216A (273 aa).

The tract at residues 1 to 47 (MLGQLLPHTARGLGAAEMPGQGPGSDWTERSSSAEPPAVAGTEGGGG) is disordered.

Belongs to the FAM216 family.

The polypeptide is Protein FAM216A (FAM216A) (Homo sapiens (Human)).